The following is a 304-amino-acid chain: MSLLAAVFLGVLQAATEFLPVSSTAHLLVFGELLGHDLADPRFRAFATIIQTGTTLAVLVYFRTEILSLLAAGLRSLARRRPLETPQSRLAWFIVLGTVPAAVLGKLFEERIEALGNWVIAGSLVVLGLVLLAAERYARHLRTVEDVGARDAVLIGLGQALALVPGSSRSGTTITAGMLLGFTREAAARFSFLLSVPIILGAGGYKLWKTVPVLRGEPSWALATLVGTAVSAVAGYLVIDWLLGWLRTRTTHLFVVWRIAAGVALAILIWQGVLPAGHASVSAPAVEAARAADPDAPLGAALRR.

The next 7 helical transmembrane spans lie at 1–21 (MSLL…FLPV), 54–74 (TTLA…AAGL), 90–110 (LAWF…LFEE), 114–134 (ALGN…LLAA), 192–212 (FLLS…KTVP), 225–245 (LVGT…LLGW), and 253–273 (LFVV…WQGV).

It belongs to the UppP family.

The protein resides in the cell inner membrane. It carries out the reaction di-trans,octa-cis-undecaprenyl diphosphate + H2O = di-trans,octa-cis-undecaprenyl phosphate + phosphate + H(+). Catalyzes the dephosphorylation of undecaprenyl diphosphate (UPP). Confers resistance to bacitracin. The polypeptide is Undecaprenyl-diphosphatase (Anaeromyxobacter sp. (strain Fw109-5)).